Here is a 441-residue protein sequence, read N- to C-terminus: Ribosomal protein uS12 methylthiotransferase RimO (441 aa).

One can recognise an MTTase N-terminal domain in the interval Pro8 to Pro118. Residues Cys17, Cys53, Cys82, Cys150, Cys154, and Cys157 each coordinate [4Fe-4S] cluster. Positions Leu136–Glu373 constitute a Radical SAM core domain. Positions Gln376–Val441 constitute a TRAM domain.

It belongs to the methylthiotransferase family. RimO subfamily. The cofactor is [4Fe-4S] cluster.

The protein localises to the cytoplasm. The catalysed reaction is L-aspartate(89)-[ribosomal protein uS12]-hydrogen + (sulfur carrier)-SH + AH2 + 2 S-adenosyl-L-methionine = 3-methylsulfanyl-L-aspartate(89)-[ribosomal protein uS12]-hydrogen + (sulfur carrier)-H + 5'-deoxyadenosine + L-methionine + A + S-adenosyl-L-homocysteine + 2 H(+). Functionally, catalyzes the methylthiolation of an aspartic acid residue of ribosomal protein uS12. This is Ribosomal protein uS12 methylthiotransferase RimO from Klebsiella pneumoniae (strain 342).